Reading from the N-terminus, the 272-residue chain is Protein FAM210A (272 aa).

The region spanning 117 to 229 (DKSISLYQRF…GYMSTPPPVK (113 aa)) is the DUF1279 domain. The helical transmembrane segment at 136 to 156 (VLIPVHLITSGVWFGTFYYAA) threads the bilayer. The stretch at 229 to 271 (KEYLQDRMEETKELITEKMEETKDRLTEKLQETKEKVSFKKKV) forms a coiled coil. The segment at 246 to 272 (KMEETKDRLTEKLQETKEKVSFKKKVE) is disordered.

The protein belongs to the FAM210 family. As to quaternary structure, interacts with ATAD3A.

The protein localises to the membrane. It is found in the mitochondrion. Its subcellular location is the cytoplasm. Functionally, may play a role in the structure and strength of both muscle and bone. The polypeptide is Protein FAM210A (FAM210A) (Homo sapiens (Human)).